The sequence spans 152 residues: Probable spermine N(1)-acetyltransferase (152 aa).

The 150-residue stretch at 3 to 152 (INIKAVTDDN…NGEKVMVKEL (150 aa)) folds into the N-acetyltransferase domain. Acetyl-CoA contacts are provided by residues 82 to 84 (FFI), 89 to 95 (QGKGLGK), and 122 to 131 (NIHAIRLYQR). The Proton donor role is filled by tyrosine 129.

The protein belongs to the acetyltransferase family.

It carries out the reaction an alkane-alpha,omega-diamine + acetyl-CoA = an N-acetylalkane-alpha,omega-diamine + CoA + H(+). The catalysed reaction is spermine + acetyl-CoA = N(1)-acetylspermine + CoA + H(+). It participates in amine and polyamine degradation; spermine degradation. In terms of biological role, probably acetylates spermine to N(1)-acetylspermine. This chain is Probable spermine N(1)-acetyltransferase, found in Bacillus subtilis subsp. natto (strain BEST195).